Consider the following 527-residue polypeptide: Glucose-6-phosphate isomerase (527 aa).

The active-site Proton donor is E347. Residues H378 and K493 contribute to the active site.

The protein belongs to the GPI family.

The protein resides in the cytoplasm. The catalysed reaction is alpha-D-glucose 6-phosphate = beta-D-fructose 6-phosphate. It participates in carbohydrate biosynthesis; gluconeogenesis. The protein operates within carbohydrate degradation; glycolysis; D-glyceraldehyde 3-phosphate and glycerone phosphate from D-glucose: step 2/4. In terms of biological role, catalyzes the reversible isomerization of glucose-6-phosphate to fructose-6-phosphate. In Chlamydia caviae (strain ATCC VR-813 / DSM 19441 / 03DC25 / GPIC) (Chlamydophila caviae), this protein is Glucose-6-phosphate isomerase.